The primary structure comprises 121 residues: Small ribosomal subunit protein uS13 (121 aa).

Residues 91–121 form a disordered region; the sequence is HRMSLPVRGQRTRTNARTRRGSRKTVAGRKK. Over residues 100-121 the composition is skewed to basic residues; that stretch reads QRTRTNARTRRGSRKTVAGRKK.

This sequence belongs to the universal ribosomal protein uS13 family. In terms of assembly, part of the 30S ribosomal subunit. Forms a loose heterodimer with protein S19. Forms two bridges to the 50S subunit in the 70S ribosome.

Located at the top of the head of the 30S subunit, it contacts several helices of the 16S rRNA. In the 70S ribosome it contacts the 23S rRNA (bridge B1a) and protein L5 of the 50S subunit (bridge B1b), connecting the 2 subunits; these bridges are implicated in subunit movement. Contacts the tRNAs in the A and P-sites. This is Small ribosomal subunit protein uS13 from Prochlorococcus marinus (strain MIT 9211).